The following is a 282-amino-acid chain: Pantothenate synthetase (282 aa).

Position 30–37 (30–37) interacts with ATP; that stretch reads MGYLHQGH. Catalysis depends on H37, which acts as the Proton donor. Q61 contacts (R)-pantoate. Q61 is a beta-alanine binding site. 147–150 serves as a coordination point for ATP; sequence GQKD. A (R)-pantoate-binding site is contributed by Q153. Residues V176 and 184-187 each bind ATP; that span reads MSSR.

It belongs to the pantothenate synthetase family. In terms of assembly, homodimer.

Its subcellular location is the cytoplasm. It carries out the reaction (R)-pantoate + beta-alanine + ATP = (R)-pantothenate + AMP + diphosphate + H(+). The protein operates within cofactor biosynthesis; (R)-pantothenate biosynthesis; (R)-pantothenate from (R)-pantoate and beta-alanine: step 1/1. In terms of biological role, catalyzes the condensation of pantoate with beta-alanine in an ATP-dependent reaction via a pantoyl-adenylate intermediate. This is Pantothenate synthetase from Geotalea daltonii (strain DSM 22248 / JCM 15807 / FRC-32) (Geobacter daltonii).